Here is a 312-residue protein sequence, read N- to C-terminus: Glyoxylate/hydroxypyruvate reductase A (312 aa).

Arg-227 is a catalytic residue. His-275 (proton donor) is an active-site residue.

This sequence belongs to the D-isomer specific 2-hydroxyacid dehydrogenase family. GhrA subfamily.

It localises to the cytoplasm. It catalyses the reaction glycolate + NADP(+) = glyoxylate + NADPH + H(+). The enzyme catalyses (R)-glycerate + NAD(+) = 3-hydroxypyruvate + NADH + H(+). It carries out the reaction (R)-glycerate + NADP(+) = 3-hydroxypyruvate + NADPH + H(+). Its function is as follows. Catalyzes the NADPH-dependent reduction of glyoxylate and hydroxypyruvate into glycolate and glycerate, respectively. In Salmonella choleraesuis (strain SC-B67), this protein is Glyoxylate/hydroxypyruvate reductase A.